Consider the following 151-residue polypeptide: Probable cGMP 3',5'-cyclic phosphodiesterase subunit delta (151 aa).

Belongs to the PDE6D/unc-119 family. In terms of assembly, interacts with Pde6.

It is found in the nucleus. Its subcellular location is the cytoplasm. The polypeptide is Probable cGMP 3',5'-cyclic phosphodiesterase subunit delta (Anopheles gambiae (African malaria mosquito)).